The primary structure comprises 398 residues: MSIKIIIPSLGESVTEATIAKWYKKLGDAVKTDELLLEIETDKVTLEVNAPCNGTIGKISKTDGANVTVGEEVGEINEIADTDTAWINNKKQEVSQHTSEQLVDKPAMASNILAPSVQKLVTENKLDPNNIKGTGRGGRITKYDVLETINTTPITIETHAINKTNEERTQRVRMSRLRKTIAQRLKDSQNTAAILTTFNEIDMSKVIALRNQYKEEFEKKHTVKLGFMSFFVKATIEALKLIPSINAEIDGDDLLYKNYYDIGVAVGTEQGLVVPVIRDADKMSFADIEQAIGNLAKKAREGKLSISDLSGGTFSISNGGVYGSLLSTPIINPPQSGILGLHKTEERAVVIDGKIEIRPMMYIALSYDHRIIDGKEGVSFLVKIKNLIENPEKLLLNL.

Residues 2–77 enclose the Lipoyl-binding domain; it reads SIKIIIPSLG…TVGEEVGEIN (76 aa). N6-lipoyllysine is present on Lys43. The Peripheral subunit-binding (PSBD) domain maps to 112-149; the sequence is ILAPSVQKLVTENKLDPNNIKGTGRGGRITKYDVLETI. Catalysis depends on residues His369 and Asp373.

Belongs to the 2-oxoacid dehydrogenase family. Forms a 24-polypeptide structural core with octahedral symmetry. Part of the 2-oxoglutarate dehydrogenase (OGDH) complex composed of E1 (2-oxoglutarate dehydrogenase), E2 (dihydrolipoamide succinyltransferase) and E3 (dihydrolipoamide dehydrogenase); the complex contains multiple copies of the three enzymatic components (E1, E2 and E3). Requires (R)-lipoate as cofactor.

The enzyme catalyses N(6)-[(R)-dihydrolipoyl]-L-lysyl-[protein] + succinyl-CoA = N(6)-[(R)-S(8)-succinyldihydrolipoyl]-L-lysyl-[protein] + CoA. It participates in amino-acid degradation; L-lysine degradation via saccharopine pathway; glutaryl-CoA from L-lysine: step 6/6. In terms of biological role, E2 component of the 2-oxoglutarate dehydrogenase (OGDH) complex which catalyzes the second step in the conversion of 2-oxoglutarate to succinyl-CoA and CO(2). This is Dihydrolipoyllysine-residue succinyltransferase component of 2-oxoglutarate dehydrogenase complex (sucB) from Rickettsia typhi (strain ATCC VR-144 / Wilmington).